The chain runs to 578 residues: Multidrug resistance-like ATP-binding protein MdlB (578 aa).

Residues 25 to 308 (LILGFTLLLF…ITSQQSIFQQ (284 aa)) enclose the ABC transmembrane type-1 domain. The next 6 membrane-spanning stretches (helical) occupy residues 26–46 (ILGF…PILI), 59–79 (VNYS…AAIL), 143–163 (SLFQ…ILEW), 166–186 (ACIA…YQYF), 196–216 (VYIA…DVIQ), and 260–280 (LILC…FEIG). One can recognise an ABC transporter domain in the interval 339–573 (IKVKNLYFSY…KSYYKNMYYS (235 aa)). Residue 373 to 380 (GRTGSGKS) participates in ATP binding.

It belongs to the ABC transporter superfamily. Drug exporter-2 (TC 3.A.1.117) family.

Its subcellular location is the cell membrane. The enzyme catalyses ATP + H2O + xenobioticSide 1 = ADP + phosphate + xenobioticSide 2.. The chain is Multidrug resistance-like ATP-binding protein MdlB (mdlB) from Buchnera aphidicola subsp. Baizongia pistaciae (strain Bp).